Consider the following 304-residue polypeptide: Homoserine O-acetyltransferase (304 aa).

Catalysis depends on C142, which acts as the Acyl-thioester intermediate. Positions 163 and 192 each coordinate substrate. The active-site Proton acceptor is the H235. The active site involves E237. R249 provides a ligand contact to substrate.

The protein belongs to the MetA family.

It is found in the cytoplasm. It carries out the reaction L-homoserine + acetyl-CoA = O-acetyl-L-homoserine + CoA. The protein operates within amino-acid biosynthesis; L-methionine biosynthesis via de novo pathway; O-acetyl-L-homoserine from L-homoserine: step 1/1. Functionally, transfers an acetyl group from acetyl-CoA to L-homoserine, forming acetyl-L-homoserine. The protein is Homoserine O-acetyltransferase of Clostridium beijerinckii (strain ATCC 51743 / NCIMB 8052) (Clostridium acetobutylicum).